The chain runs to 474 residues: Glycogen synthase (474 aa).

Lysine 12 lines the ADP-alpha-D-glucose pocket.

This sequence belongs to the glycosyltransferase 1 family. Bacterial/plant glycogen synthase subfamily.

The enzyme catalyses [(1-&gt;4)-alpha-D-glucosyl](n) + ADP-alpha-D-glucose = [(1-&gt;4)-alpha-D-glucosyl](n+1) + ADP + H(+). It participates in glycan biosynthesis; glycogen biosynthesis. Synthesizes alpha-1,4-glucan chains using ADP-glucose. The polypeptide is Glycogen synthase (Xanthomonas campestris pv. campestris (strain 8004)).